Reading from the N-terminus, the 109-residue chain is Ferredoxin (109 aa).

2 4Fe-4S ferredoxin-type domains span residues 2-30 (TYVV…YEGE) and 31-60 (FMLV…PESP). Residues cysteine 9 and cysteine 17 each contribute to the [3Fe-4S] cluster site. Residues cysteine 21, cysteine 40, cysteine 43, and cysteine 46 each coordinate [4Fe-4S] cluster. Cysteine 50 contacts [3Fe-4S] cluster.

[4Fe-4S] cluster is required as a cofactor. Requires [3Fe-4S] cluster as cofactor.

Its function is as follows. Ferredoxins are iron-sulfur proteins that transfer electrons in a wide variety of metabolic reactions. In Rickettsia prowazekii (strain Madrid E), this protein is Ferredoxin (fdxA).